Consider the following 448-residue polypeptide: Adenylosuccinate synthetase (448 aa).

Residues 36–42 and 64–66 each bind GTP; these read GDEGKGK and GHT. Asp37 serves as the catalytic Proton acceptor. The Mg(2+) site is built by Asp37 and Gly64. Residues 37–40, 62–65, Thr154, Arg168, Asn246, Thr261, and Arg325 contribute to the IMP site; these read DEGK and NAGH. The active-site Proton donor is His65. 321-327 is a substrate binding site; the sequence is VTTKRKR. Residues Arg327, 353–355, and 436–438 each bind GTP; these read KLD and GVG.

Belongs to the adenylosuccinate synthetase family. As to quaternary structure, homodimer. Mg(2+) serves as cofactor.

The protein localises to the cytoplasm. The catalysed reaction is IMP + L-aspartate + GTP = N(6)-(1,2-dicarboxyethyl)-AMP + GDP + phosphate + 2 H(+). The protein operates within purine metabolism; AMP biosynthesis via de novo pathway; AMP from IMP: step 1/2. Its function is as follows. Plays an important role in the de novo pathway and in the salvage pathway of purine nucleotide biosynthesis. Catalyzes the first committed step in the biosynthesis of AMP from IMP. The chain is Adenylosuccinate synthetase from Drosophila persimilis (Fruit fly).